We begin with the raw amino-acid sequence, 79 residues long: uncharacterized protein (79 aa).

The region spanning 3-54 (SKKNKIVAALLAFFFGGLGIHKFYLGRVGQGILYILFCWTGIPSIIAFIEFI) is the TM2 domain. The next 2 membrane-spanning stretches (helical) occupy residues 8 to 28 (IVAALLAFFFGGLGIHKFYLG) and 37 to 57 (ILFCWTGIPSIIAFIEFIIFL).

The protein resides in the cell membrane. This is an uncharacterized protein from Bacillus subtilis (strain 168).